A 301-amino-acid polypeptide reads, in one-letter code: Outer membrane porin G (301 aa).

Positions 1–21 are cleaved as a signal peptide; the sequence is MKKLLPCTALVMCAGMACAQA. The next 16 beta stranded transmembrane spans lie at 27 to 35, 47 to 57, 64 to 72, 89 to 98, 104 to 112, 129 to 136, 149 to 158, 172 to 182, 186 to 195, 201 to 209, 213 to 222, 230 to 238, 240 to 248, 254 to 265, 269 to 279, and 289 to 300; these read WHFNIGAMY, MDGLAEPSVYF, WRIALAYYQ, RPELEVHYQF, FSFGLTGGF, NMQRWKIA, FNGWLSMYKF, VETETGLQYTF, VALRVNYYLE, DDSRNNGEF, EIRAYLPLTL, YTRIGLDRW, NWDWQDDIE, FNRVGLFYGYDF, LSVSLEYAFEW, and KFHYAGVGVNYS.

As to quaternary structure, monomer.

Its subcellular location is the cell outer membrane. Its function is as follows. Forms channels functionally larger than those of classical porins. In terms of biological role, may act as a regulator of the RCS-phosphorelay signal transduction pathway. This is Outer membrane porin G (ompG) from Escherichia coli (strain K12).